Consider the following 217-residue polypeptide: Oxygen-insensitive NAD(P)H nitroreductase (217 aa).

FMN is bound at residue 10–14; sequence RYSTK. NAD(+) contacts are provided by lysine 14, threonine 41, asparagine 71, lysine 74, and arginine 107. Asparagine 71 contacts FMN. FMN-binding positions include 165–166 and 205–207; these read EG and KSR.

This sequence belongs to the nitroreductase family. In terms of assembly, homodimer. FMN serves as cofactor.

Its function is as follows. Reduction of a variety of nitroaromatic compounds using NADH (and to lesser extent NADPH) as source of reducing equivalents; two electrons are transferred. Capable of reducing nitrofurazone. This Salmonella typhimurium (strain LT2 / SGSC1412 / ATCC 700720) protein is Oxygen-insensitive NAD(P)H nitroreductase.